Consider the following 348-residue polypeptide: Methylthioribose-1-phosphate isomerase (348 aa).

Substrate-binding positions include 46-48, Arg-88, and Gln-194; that span reads RGA. The active-site Proton donor is the Asp-235. 245 to 246 is a binding site for substrate; the sequence is NK.

Belongs to the eIF-2B alpha/beta/delta subunits family. MtnA subfamily.

The enzyme catalyses 5-(methylsulfanyl)-alpha-D-ribose 1-phosphate = 5-(methylsulfanyl)-D-ribulose 1-phosphate. It participates in amino-acid biosynthesis; L-methionine biosynthesis via salvage pathway; L-methionine from S-methyl-5-thio-alpha-D-ribose 1-phosphate: step 1/6. Functionally, catalyzes the interconversion of methylthioribose-1-phosphate (MTR-1-P) into methylthioribulose-1-phosphate (MTRu-1-P). This chain is Methylthioribose-1-phosphate isomerase, found in Desulforudis audaxviator (strain MP104C).